The chain runs to 469 residues: ATP synthase subunit beta (469 aa).

155–162 (GGAGVGKT) contributes to the ATP binding site.

It belongs to the ATPase alpha/beta chains family. F-type ATPases have 2 components, CF(1) - the catalytic core - and CF(0) - the membrane proton channel. CF(1) has five subunits: alpha(3), beta(3), gamma(1), delta(1), epsilon(1). CF(0) has three main subunits: a(1), b(2) and c(9-12). The alpha and beta chains form an alternating ring which encloses part of the gamma chain. CF(1) is attached to CF(0) by a central stalk formed by the gamma and epsilon chains, while a peripheral stalk is formed by the delta and b chains.

It is found in the cell inner membrane. It catalyses the reaction ATP + H2O + 4 H(+)(in) = ADP + phosphate + 5 H(+)(out). Produces ATP from ADP in the presence of a proton gradient across the membrane. The catalytic sites are hosted primarily by the beta subunits. In Syntrophobacter fumaroxidans (strain DSM 10017 / MPOB), this protein is ATP synthase subunit beta.